Consider the following 476-residue polypeptide: Stromelysin-2 (476 aa).

Positions 1–17 (MMHLAFLVLLCLPVCSA) are cleaved as a signal peptide. Positions 18-98 (YPLSGAAKEE…PRCGVPDVGH (81 aa)) are cleaved as a propeptide — activation peptide. A Cysteine switch motif is present at residues 89–96 (PRCGVPDV). Zn(2+) is bound by residues Cys-91, His-167, Asp-169, His-182, His-195, and His-217. Glu-218 is an active-site residue. Positions 221 and 227 each coordinate Zn(2+). Hemopexin repeat units follow at residues 286–335 (PAKC…WPSL), 336–382 (PSYL…GFPP), 384–432 (IRKI…FPGV), and 433–476 (EPKV…WLHC). Cys-289 and Cys-476 form a disulfide bridge.

This sequence belongs to the peptidase M10A family. Zn(2+) serves as cofactor. It depends on Ca(2+) as a cofactor.

It localises to the secreted. The protein resides in the extracellular space. The protein localises to the extracellular matrix. It carries out the reaction Similar to stromelysin 1, but action on collagen types III, IV and V is weak.. Can degrade fibronectin, gelatins of type I, III, IV, and V; weakly collagens III, IV, and V. Activates procollagenase. This Homo sapiens (Human) protein is Stromelysin-2 (MMP10).